The following is a 250-amino-acid chain: Urease accessory protein UreF (250 aa).

The segment at 1 to 21 is disordered; the sequence is MDEADPGEAEAAQAEAAQDGA. Positions 9-21 are enriched in low complexity; sequence AEAAQAEAAQDGA.

This sequence belongs to the UreF family. As to quaternary structure, ureD, UreF and UreG form a complex that acts as a GTP-hydrolysis-dependent molecular chaperone, activating the urease apoprotein by helping to assemble the nickel containing metallocenter of UreC. The UreE protein probably delivers the nickel.

The protein localises to the cytoplasm. Required for maturation of urease via the functional incorporation of the urease nickel metallocenter. This Methylobacterium sp. (strain 4-46) protein is Urease accessory protein UreF.